We begin with the raw amino-acid sequence, 487 residues long: Uronate isomerase (487 aa).

This sequence belongs to the metallo-dependent hydrolases superfamily. Uronate isomerase family.

It catalyses the reaction D-glucuronate = D-fructuronate. The catalysed reaction is aldehydo-D-galacturonate = keto-D-tagaturonate. Its pathway is carbohydrate metabolism; pentose and glucuronate interconversion. This chain is Uronate isomerase, found in Caulobacter vibrioides (strain ATCC 19089 / CIP 103742 / CB 15) (Caulobacter crescentus).